A 177-amino-acid chain; its full sequence is Alkyl hydroperoxide reductase AhpD (177 aa).

The active-site Proton donor is Cys130. A disulfide bridge connects residues Cys130 and Cys133. The active-site Cysteine sulfenic acid (-SOH) intermediate is the Cys133.

This sequence belongs to the AhpD family. Homotrimer.

It carries out the reaction N(6)-[(R)-dihydrolipoyl]-L-lysyl-[lipoyl-carrier protein] + a hydroperoxide = N(6)-[(R)-lipoyl]-L-lysyl-[lipoyl-carrier protein] + an alcohol + H2O. Its function is as follows. Antioxidant protein with alkyl hydroperoxidase activity. Required for the reduction of the AhpC active site cysteine residues and for the regeneration of the AhpC enzyme activity. This chain is Alkyl hydroperoxide reductase AhpD, found in Mycolicibacterium smegmatis (strain ATCC 700084 / mc(2)155) (Mycobacterium smegmatis).